A 527-amino-acid polypeptide reads, in one-letter code: Nucleobase-ascorbate transporter LPE1 (527 aa).

A run of 12 helical transmembrane segments spans residues 43 to 63, 68 to 88, 92 to 112, 132 to 152, 163 to 183, 189 to 209, 219 to 239, 284 to 304, 361 to 383, 387 to 409, 427 to 447, and 458 to 478; these read LVML…MGGG, AIVI…QVHF, LPAV…IILS, LQGA…FGIW, AAVP…FPGV, VGLP…HLFA, AVLV…AAGA, FAML…LIAV, VIKI…AVLA, LPIF…FSLL, LFLG…FGFG, and VMVN…AYLL.

The protein belongs to the nucleobase:cation symporter-2 (NCS2) (TC 2.A.40) family. Highly expressed in roots.

The protein resides in the membrane. Its activity is regulated as follows. Inhibited by excess of xanthin, uric acid and ascorbic acid, and by 100 um N,N-dicyclohexylcarbodiimide and 30 um carbonyl cyanide m-chlorophenyl-hydrazone. Functionally, high affinity uric acid-xanthine transporter in A.nidulans. Binds, but cannot transport ascorbic acid. This is Nucleobase-ascorbate transporter LPE1 (LPE1) from Zea mays (Maize).